A 129-amino-acid chain; its full sequence is Histone H2A-IV (129 aa).

Belongs to the histone H2A family. The nucleosome is a histone octamer containing two molecules each of H2A, H2B, H3 and H4 assembled in one H3-H4 heterotetramer and two H2A-H2B heterodimers. The octamer wraps approximately 147 bp of DNA.

The protein resides in the nucleus. It is found in the chromosome. Functionally, core component of nucleosome. Nucleosomes wrap and compact DNA into chromatin, limiting DNA accessibility to the cellular machineries which require DNA as a template. Histones thereby play a central role in transcription regulation, DNA repair, DNA replication and chromosomal stability. DNA accessibility is regulated via a complex set of post-translational modifications of histones, also called histone code, and nucleosome remodeling. The polypeptide is Histone H2A-IV (Volvox carteri (Green alga)).